The primary structure comprises 218 residues: Cytochrome b6 (218 aa).

The chain crosses the membrane as a helical span at residues 35-55 (IFYCLGGITLVCFLIQFATGF). A heme c-binding site is contributed by Cys38. His89 and His103 together coordinate heme b. 3 helical membrane passes run 93–113 (ASMMVLMLILHVFRVYLTGGF), 119–139 (LTWVTGVVMAVITVAFGVTGY), and 189–209 (LHTFVLPWTLAVFMLMHFLMI). Residues His190 and His205 each contribute to the heme b site.

It belongs to the cytochrome b family. PetB subfamily. In terms of assembly, the 4 large subunits of the cytochrome b6-f complex are cytochrome b6, subunit IV (17 kDa polypeptide, PetD), cytochrome f and the Rieske protein, while the 4 small subunits are PetG, PetL, PetM and PetN. The complex functions as a dimer. Heme b serves as cofactor. Heme c is required as a cofactor.

It is found in the cellular thylakoid membrane. In terms of biological role, component of the cytochrome b6-f complex, which mediates electron transfer between photosystem II (PSII) and photosystem I (PSI), cyclic electron flow around PSI, and state transitions. This chain is Cytochrome b6, found in Prochlorococcus marinus (strain MIT 9211).